A 204-amino-acid polypeptide reads, in one-letter code: Ras-related protein R-Ras2 (204 aa).

Alanine 2 bears the N-acetylalanine mark. Residue 21 to 29 participates in GTP binding; the sequence is GGGGVGKSA. The short motif at 43–51 is the Effector region element; that stretch reads YDPTIEDSY. GTP-binding positions include 68–72, 127–130, and 157–159; these read DTAGQ, NKAD, and SAK. Residue serine 186 is modified to Phosphoserine. Residues lysine 192, lysine 194, lysine 196, and lysine 197 are each lipidated (N6-palmitoyl lysine). Cysteine 199 is lipidated: S-palmitoyl cysteine. Cysteine 201 carries the cysteine methyl ester modification. Cysteine 201 carries the S-farnesyl cysteine lipid modification. A propeptide spans 202–204 (removed in mature form); sequence VIF.

Belongs to the small GTPase superfamily. Ras family. In terms of assembly, interacts with RASSF5. In terms of processing, may be post-translationally modified by both palmitoylation and polyisoprenylation. Fatty-acylation at Lys-192, Lys-194; lys-196 and Lys-197 is required for localization to the plasma membrane and activity. Defatty-acylated by SIRT6, affecting its localization to the plasma membrane. As to expression, ubiquitously present in all tissues examined, with the highest levels in heart, placenta, and skeletal muscle. Moderate levels in lung and liver; low levels in brain, kidney, and pancreas.

It localises to the cell membrane. It is found in the golgi apparatus membrane. It catalyses the reaction GTP + H2O = GDP + phosphate + H(+). GTP-binding protein with GTPase activity, involved in the regulation of MAPK signaling pathway and thereby controlling multiple cellular processes. Regulates craniofacial development. The polypeptide is Ras-related protein R-Ras2 (Homo sapiens (Human)).